The sequence spans 241 residues: 4-hydroxy-tetrahydrodipicolinate reductase (241 aa).

NAD(+) contacts are provided by residues 80–82 and 104–107; these read ATT and SANM. His-136 acts as the Proton donor/acceptor in catalysis. His-137 is a binding site for (S)-2,3,4,5-tetrahydrodipicolinate. The Proton donor role is filled by Lys-140. 146–147 is a binding site for (S)-2,3,4,5-tetrahydrodipicolinate; that stretch reads GT.

Belongs to the DapB family.

The protein localises to the cytoplasm. The enzyme catalyses (S)-2,3,4,5-tetrahydrodipicolinate + NAD(+) + H2O = (2S,4S)-4-hydroxy-2,3,4,5-tetrahydrodipicolinate + NADH + H(+). The catalysed reaction is (S)-2,3,4,5-tetrahydrodipicolinate + NADP(+) + H2O = (2S,4S)-4-hydroxy-2,3,4,5-tetrahydrodipicolinate + NADPH + H(+). Its pathway is amino-acid biosynthesis; L-lysine biosynthesis via DAP pathway; (S)-tetrahydrodipicolinate from L-aspartate: step 4/4. Functionally, catalyzes the conversion of 4-hydroxy-tetrahydrodipicolinate (HTPA) to tetrahydrodipicolinate. The protein is 4-hydroxy-tetrahydrodipicolinate reductase of Staphylococcus haemolyticus (strain JCSC1435).